The chain runs to 571 residues: MEDYSNLSLKSIPKRTCRIIFRTATILGICTLIVLCSSILHEIIHLDVSSGLMDSDDSQQGIIQPIIESLKSLIALANQILYNVAIIIPLKIDSIETVIYSALKDMHTGSMSNTNCTPGNLLLHDAAYINGLNKFLVLKSYNGTPKYGPLLNIPSFIPSATSPNGCTRIPSFSLIKTHWCYTHNVILGDCLDFTTSNQYLAMGIIQQSAAAFPIFRTMKTIYLSDGINRKSCSVTAIPGGCVLYCYVATRSEKEDYATTDLAELRLAFYYYNDTFIERVISLPNTTGQWATINPAVGSGIYHLGFILFPVYGGLIKGTPSYNKQSSRYFIPKHPNITCAGKSSEQAAAARSSYVIRYHSNRLLQSAVLICPLSDMHTARCNLVMFNNSQVMMGAEGRLYVIDNNLYYYQRSSSWWSASLFYRINTDFSKGIPPIIEAQWVPSYQVPRPGVMPCNATSFCPANCITGVYADVWPLNDPEPTSQNALNPNYRFAGAFLRNESNRTNPTFYTASASALLNTTGFNNTNHKAAYTSSTCFKNTGTQKIYCLIIIEMGSSLLGEFQIIPFLRELIP.

Residues Met-1 to Thr-25 are Intravirion-facing. The helical transmembrane segment at Ile-26–Leu-46 threads the bilayer. Topologically, residues Asp-47–Pro-571 are virion surface. 3 disulfides stabilise this stretch: Cys-166/Cys-190, Cys-180/Cys-241, and Cys-232/Cys-245. The interval Asn-228–Ser-233 is involved in neuraminidase activity. Residues Asn-272, Asn-284, and Asn-335 are each glycosylated (N-linked (GlcNAc...) asparagine; by host). Cystine bridges form between Cys-338/Cys-459, Cys-370/Cys-380, and Cys-453/Cys-463. N-linked (GlcNAc...) asparagine; by host glycosylation is found at Asn-386, Asn-454, Asn-498, Asn-501, Asn-517, and Asn-522. Residues Cys-535 and Cys-546 are joined by a disulfide bond.

It belongs to the paramyxoviruses hemagglutinin-neuraminidase family. In terms of assembly, homotetramer; composed of disulfide-linked homodimers. Interacts with F protein trimer.

It localises to the virion membrane. It is found in the host cell membrane. It catalyses the reaction Hydrolysis of alpha-(2-&gt;3)-, alpha-(2-&gt;6)-, alpha-(2-&gt;8)- glycosidic linkages of terminal sialic acid residues in oligosaccharides, glycoproteins, glycolipids, colominic acid and synthetic substrates.. Its function is as follows. Attaches the virus to sialic acid-containing cell receptors and thereby initiating infection. Binding of HN protein to the receptor induces a conformational change that allows the F protein to trigger virion/cell membranes fusion. In terms of biological role, neuraminidase activity ensures the efficient spread of the virus by dissociating the mature virions from the neuraminic acid containing glycoproteins. The sequence is that of Hemagglutinin-neuraminidase (HN) from Homo sapiens (Human).